The primary structure comprises 394 residues: Elongation factor Tu (394 aa).

The 196-residue stretch at 10–205 folds into the tr-type G domain; sequence KPHVNIGTIG…VDNWIPLPPR (196 aa). The tract at residues 19–26 is G1; it reads GHVDHGKT. Residue 19–26 coordinates GTP; the sequence is GHVDHGKT. Thr-26 contributes to the Mg(2+) binding site. The interval 60 to 64 is G2; the sequence is GITIN. The G3 stretch occupies residues 81-84; it reads DCPG. Residues 81–85 and 136–139 each bind GTP; these read DCPGH and NKCD. Residues 136–139 are G4; that stretch reads NKCD. The G5 stretch occupies residues 174–176; that stretch reads SAL.

The protein belongs to the TRAFAC class translation factor GTPase superfamily. Classic translation factor GTPase family. EF-Tu/EF-1A subfamily. In terms of assembly, monomer.

It is found in the cytoplasm. The catalysed reaction is GTP + H2O = GDP + phosphate + H(+). GTP hydrolase that promotes the GTP-dependent binding of aminoacyl-tRNA to the A-site of ribosomes during protein biosynthesis. This is Elongation factor Tu from Bacteroides thetaiotaomicron (strain ATCC 29148 / DSM 2079 / JCM 5827 / CCUG 10774 / NCTC 10582 / VPI-5482 / E50).